We begin with the raw amino-acid sequence, 99 residues long: Putative GIY-YIG domain-containing protein 242L (99 aa).

The region spanning 5–81 (NGWNIYMVTM…KKQTKKVKLQ (77 aa)) is the GIY-YIG domain.

The polypeptide is Putative GIY-YIG domain-containing protein 242L (Invertebrate iridescent virus 6 (IIV-6)).